The following is a 100-amino-acid chain: Nucleoid-associated protein Caur_0522 (100 aa).

Belongs to the YbaB/EbfC family. As to quaternary structure, homodimer.

It localises to the cytoplasm. The protein localises to the nucleoid. Its function is as follows. Binds to DNA and alters its conformation. May be involved in regulation of gene expression, nucleoid organization and DNA protection. This is Nucleoid-associated protein Caur_0522 from Chloroflexus aurantiacus (strain ATCC 29366 / DSM 635 / J-10-fl).